The primary structure comprises 302 residues: Oxygen-dependent coproporphyrinogen-III oxidase (302 aa).

Ser90 contributes to the substrate binding site. A divalent metal cation-binding residues include His94 and His104. The Proton donor role is filled by His104. Asn106–Arg108 serves as a coordination point for substrate. The a divalent metal cation site is built by His143 and His173. Residues Tyr238–Arg273 form an important for dimerization region.

This sequence belongs to the aerobic coproporphyrinogen-III oxidase family. Homodimer. A divalent metal cation serves as cofactor.

The protein resides in the cytoplasm. The catalysed reaction is coproporphyrinogen III + O2 + 2 H(+) = protoporphyrinogen IX + 2 CO2 + 2 H2O. It participates in porphyrin-containing compound metabolism; protoporphyrin-IX biosynthesis; protoporphyrinogen-IX from coproporphyrinogen-III (O2 route): step 1/1. Involved in the heme biosynthesis. Catalyzes the aerobic oxidative decarboxylation of propionate groups of rings A and B of coproporphyrinogen-III to yield the vinyl groups in protoporphyrinogen-IX. This is Oxygen-dependent coproporphyrinogen-III oxidase from Methylobacillus flagellatus (strain ATCC 51484 / DSM 6875 / VKM B-1610 / KT).